Reading from the N-terminus, the 88-residue chain is MAIKMRLARAGAKKKPFYQIVIADVRSRRDGRFIENVGTYDPNQNPAAVKFEEGKALEWLGKGAQPTDTVKQMLKTAGLWEKFTTKPA.

Belongs to the bacterial ribosomal protein bS16 family.

The chain is Small ribosomal subunit protein bS16 from Geobacter metallireducens (strain ATCC 53774 / DSM 7210 / GS-15).